A 101-amino-acid polypeptide reads, in one-letter code: Thrombin-like enzyme okinaxobin-1 (101 aa).

The first 16 residues, 1–16 (LIRVLANLLILQLSYA), serve as a signal peptide directing secretion. A propeptide spanning residues 17 to 22 (QKSSEL) is cleaved from the precursor. One can recognise a Peptidase S1 domain in the interval 23-101 (VIGGDECNIN…PKKKYFFRCR (79 aa)). Residues cysteine 50 and cysteine 66 are joined by a disulfide bond. Histidine 65 functions as the Charge relay system in the catalytic mechanism.

Belongs to the peptidase S1 family. Snake venom subfamily. In terms of assembly, monomer. Post-translationally, glycosylated. As to expression, expressed by the venom gland.

The protein localises to the secreted. With respect to regulation, strongly inactivated by diisopropylfluorophosphate (DFP) and phenylmethanesulfonyl fluoride (PMSF), and to a lesser extent by tosyl-L-lysine chloromethyl ketone (TLCK). Thrombin-like snake venom serine protease that releases specifically fibrinopeptide B from fibrinogen (FGB) to form fibrin clots. Shows a preferential cleavage at Arg-|-Gly bonds in fibrinogen beta chains. Cleaves fibrinogen beta chains preferentially to alpha chains. The polypeptide is Thrombin-like enzyme okinaxobin-1 (Ovophis okinavensis (Ryukyu Island pit viper)).